Reading from the N-terminus, the 316-residue chain is Beta-ketoacyl-[acyl-carrier-protein] synthase III (316 aa).

Active-site residues include cysteine 112 and histidine 243. An ACP-binding region spans residues 244–248 (QANIR). Residue asparagine 273 is part of the active site.

This sequence belongs to the thiolase-like superfamily. FabH family. In terms of assembly, homodimer.

The protein resides in the cytoplasm. It carries out the reaction malonyl-[ACP] + acetyl-CoA + H(+) = 3-oxobutanoyl-[ACP] + CO2 + CoA. It functions in the pathway lipid metabolism; fatty acid biosynthesis. Catalyzes the condensation reaction of fatty acid synthesis by the addition to an acyl acceptor of two carbons from malonyl-ACP. Catalyzes the first condensation reaction which initiates fatty acid synthesis and may therefore play a role in governing the total rate of fatty acid production. Possesses both acetoacetyl-ACP synthase and acetyl transacylase activities. Its substrate specificity determines the biosynthesis of branched-chain and/or straight-chain of fatty acids. In Actinobacillus pleuropneumoniae serotype 5b (strain L20), this protein is Beta-ketoacyl-[acyl-carrier-protein] synthase III.